The chain runs to 406 residues: Cholinephosphotransferase 1 (406 aa).

Ala2 is subject to N-acetylalanine. At 2–62 (AAGAGARPAP…LLQWIPLWMA (61 aa)) the chain is on the cytoplasmic side. A helical membrane pass occupies residues 63–83 (PNSITLLGLAINMLTTLVLIS). Asn64 lines the CDP-choline pocket. The Lumenal portion of the chain corresponds to 84–93 (YCPTVTEEAP). A helical transmembrane segment spans residues 94–118 (YWTYLLCALGLFIYQSLDAIDGKQA). Mg(2+) contacts are provided by Asp111 and Asp114. A CDP-choline-binding site is contributed by Arg119. Topologically, residues 119-125 (RRTNSCS) are cytoplasmic. The helical transmembrane segment at 126 to 150 (PLGELFDHGCDSLSTVFMAVGASIA) threads the bilayer. Asp132 is a binding site for Mg(2+). His133 serves as the catalytic Proton acceptor. Asp136 is a binding site for Mg(2+). Topologically, residues 151 to 160 (VRLGTHPDWL) are lumenal. The chain crosses the membrane as a helical span at residues 161–179 (FFCSFIGMFMFYCAHWQTY). Over 180 to 190 (VSGVLRFGKVD) the chain is Cytoplasmic. A helical membrane pass occupies residues 191–207 (VTEIQIALVIVFVLSTF). Residues 208–222 (GGATMWDYTIPILEI) are Lumenal-facing. A helical membrane pass occupies residues 223–248 (KLKILPVLGVVGGAIFSCSNYFHVIL). The Cytoplasmic portion of the chain corresponds to 249–265 (HGGVGKNGSTIAGTSVL). A helical transmembrane segment spans residues 266-281 (SPGLHIGIIIILAIMI). The Lumenal segment spans residues 282–293 (YKKSATNLFEKH). A helical membrane pass occupies residues 294–316 (PCLYTLMFGCVFAKVSQKLVIAH). Residues 317–329 (MTKSELYLQDTVF) are Cytoplasmic-facing. The helical transmembrane segment at 330–339 (IGPGLLFLDQ) threads the bilayer. At 340-346 (YFNNFVD) the chain is on the lumenal side. The helical transmembrane segment at 347–376 (EYIVLWIAMVISSLDMMRYFSALCLQISRH) threads the bilayer. Residues 377 to 406 (LHLSIFKTSCHQAPEQVQVLPPKSHQNNMD) lie on the Cytoplasmic side of the membrane.

It belongs to the CDP-alcohol phosphatidyltransferase class-I family. Mg(2+) is required as a cofactor. It depends on Mn(2+) as a cofactor.

It is found in the golgi apparatus membrane. It carries out the reaction CDP-choline + a 1,2-diacyl-sn-glycerol = a 1,2-diacyl-sn-glycero-3-phosphocholine + CMP + H(+). The enzyme catalyses 1-octadecanoyl-2-(5Z,8Z,11Z,14Z-eicosatetraenoyl)-sn-glycerol + CDP-choline = 1-octadecanoyl-2-(5Z,8Z,11Z,14Z-eicosatetraenoyl)-sn-glycero-3-phosphocholine + CMP + H(+). It catalyses the reaction 1-hexadecanoyl-2-(9Z-octadecenoyl)-sn-glycerol + CDP-choline = 1-hexadecanoyl-2-(9Z-octadecenoyl)-sn-glycero-3-phosphocholine + CMP + H(+). The catalysed reaction is 1-hexadecanoyl-2-(4Z,7Z,10Z,13Z,16Z,19Z-docosahexaenoyl)-sn-glycerol + CDP-choline = 1-hexadecanoyl-2-(4Z,7Z,10Z,13Z,16Z,19Z-docosahexaenoyl)-sn-glycero-3-phosphocholine + CMP + H(+). It carries out the reaction 1,2-dioctanoyl-sn-glycerol + CDP-choline = 1,2-dioctanoyl-sn-glycero-3-phosphocholine + CMP + H(+). The protein operates within phospholipid metabolism; phosphatidylcholine biosynthesis; phosphatidylcholine from phosphocholine: step 2/2. Functionally, catalyzes the final step of de novo phosphatidylcholine (PC) synthesis, i.e. the transfer of choline phosphate from CDP-choline to the free hydroxyl of a diacylglycerol (DAG), producing a PC. It thereby plays a central role in the formation and maintenance of vesicular membranes. The sequence is that of Cholinephosphotransferase 1 (CHPT1) from Bos taurus (Bovine).